A 199-amino-acid chain; its full sequence is Recombination protein RecR (199 aa).

The C4-type zinc-finger motif lies at 58–73 (CSVCYGLADSDPCHIC). Residues 81 to 176 (DVVCVVEQGT…KITRIASGVP (96 aa)) form the Toprim domain.

It belongs to the RecR family.

Its function is as follows. May play a role in DNA repair. It seems to be involved in an RecBC-independent recombinational process of DNA repair. It may act with RecF and RecO. This chain is Recombination protein RecR, found in Desulfatibacillum aliphaticivorans.